The sequence spans 310 residues: N-acetyl-gamma-glutamyl-phosphate reductase (310 aa).

Residue C116 is part of the active site.

Belongs to the NAGSA dehydrogenase family. Type 2 subfamily.

The protein localises to the cytoplasm. It carries out the reaction N-acetyl-L-glutamate 5-semialdehyde + phosphate + NADP(+) = N-acetyl-L-glutamyl 5-phosphate + NADPH + H(+). Its pathway is amino-acid biosynthesis; L-arginine biosynthesis; N(2)-acetyl-L-ornithine from L-glutamate: step 3/4. Catalyzes the NADPH-dependent reduction of N-acetyl-5-glutamyl phosphate to yield N-acetyl-L-glutamate 5-semialdehyde. This is N-acetyl-gamma-glutamyl-phosphate reductase from Chelativorans sp. (strain BNC1).